Here is a 57-residue protein sequence, read N- to C-terminus: Large ribosomal subunit protein bL32 (57 aa).

The interval 1-23 (MAVPKKRTSKTRTNRRRAQKKAR) is disordered.

The protein belongs to the bacterial ribosomal protein bL32 family.

This Natranaerobius thermophilus (strain ATCC BAA-1301 / DSM 18059 / JW/NM-WN-LF) protein is Large ribosomal subunit protein bL32.